A 456-amino-acid chain; its full sequence is MLDIHLLRTQLDHVARLLAERNYVFPLAEFSALEAERKNLQTSTQELQARRNGASKQIGNAKSRGEDASAILAEVAHLGDELKQAESRLDQVQAALQHILLQIPNLPHSSVPEGRSESDNREVRRWGTPPTFDFSPADHVSIGERLGLLDFPTAAKISGARFSLLTGSLAHLHRALAQFMLDVHVREHGYTETYVPYLVNAESLRGTGQLPKFKEDLFEVPRRKTAEPFLENQPVAATLPSNSNSPQGGQDDDDLYLIPTSEVPLSNIVRDRIVDPELLPIKLTAHTPCFRSEAGSYGRDTRGMIRQHQFEKVELVQIVHPAHSYKALEELTGHAEAILQKLKLPYRVMALCTADMGFAAAKTYDIEVWLPQQGTYREISSCSNCEAFQARRMQARFRNEKGKPELLHTLNGSGLAVGRTLVAILENFQNADGSVSIPKVLQGYMGGTERLVPHNA.

Disordered regions lie at residues 107 to 130 and 229 to 253; these read PHSSVPEGRSESDNREVRRWGTPP and FLENQPVAATLPSNSNSPQGGQDDD. A compositionally biased stretch (basic and acidic residues) spans 114 to 125; the sequence is GRSESDNREVRR. A compositionally biased stretch (polar residues) spans 239–248; that stretch reads LPSNSNSPQG. L-serine is bound at residue 260 to 262; sequence TSE. 291–293 is a binding site for ATP; the sequence is RSE. Position 314 (E314) interacts with L-serine. 378 to 381 lines the ATP pocket; it reads EISS. S413 provides a ligand contact to L-serine.

This sequence belongs to the class-II aminoacyl-tRNA synthetase family. Type-1 seryl-tRNA synthetase subfamily. As to quaternary structure, homodimer. The tRNA molecule binds across the dimer.

It is found in the cytoplasm. It catalyses the reaction tRNA(Ser) + L-serine + ATP = L-seryl-tRNA(Ser) + AMP + diphosphate + H(+). It carries out the reaction tRNA(Sec) + L-serine + ATP = L-seryl-tRNA(Sec) + AMP + diphosphate + H(+). It functions in the pathway aminoacyl-tRNA biosynthesis; selenocysteinyl-tRNA(Sec) biosynthesis; L-seryl-tRNA(Sec) from L-serine and tRNA(Sec): step 1/1. Catalyzes the attachment of serine to tRNA(Ser). Is also able to aminoacylate tRNA(Sec) with serine, to form the misacylated tRNA L-seryl-tRNA(Sec), which will be further converted into selenocysteinyl-tRNA(Sec). The protein is Serine--tRNA ligase of Nitrosospira multiformis (strain ATCC 25196 / NCIMB 11849 / C 71).